The sequence spans 273 residues: Formamidopyrimidine-DNA glycosylase (273 aa).

The active-site Schiff-base intermediate with DNA is P2. The Proton donor role is filled by E3. K58 functions as the Proton donor; for beta-elimination activity in the catalytic mechanism. DNA contacts are provided by H91, R109, and R154. The FPG-type zinc finger occupies 239–273 (FCYARTGEPCRICKTPIRQIVQGQRSTFYCPNCQK). R263 functions as the Proton donor; for delta-elimination activity in the catalytic mechanism.

This sequence belongs to the FPG family. As to quaternary structure, monomer. Zn(2+) serves as cofactor.

The catalysed reaction is Hydrolysis of DNA containing ring-opened 7-methylguanine residues, releasing 2,6-diamino-4-hydroxy-5-(N-methyl)formamidopyrimidine.. It carries out the reaction 2'-deoxyribonucleotide-(2'-deoxyribose 5'-phosphate)-2'-deoxyribonucleotide-DNA = a 3'-end 2'-deoxyribonucleotide-(2,3-dehydro-2,3-deoxyribose 5'-phosphate)-DNA + a 5'-end 5'-phospho-2'-deoxyribonucleoside-DNA + H(+). In terms of biological role, involved in base excision repair of DNA damaged by oxidation or by mutagenic agents. Acts as a DNA glycosylase that recognizes and removes damaged bases. Has a preference for oxidized purines, such as 7,8-dihydro-8-oxoguanine (8-oxoG). Has AP (apurinic/apyrimidinic) lyase activity and introduces nicks in the DNA strand. Cleaves the DNA backbone by beta-delta elimination to generate a single-strand break at the site of the removed base with both 3'- and 5'-phosphates. The polypeptide is Formamidopyrimidine-DNA glycosylase (Janthinobacterium sp. (strain Marseille) (Minibacterium massiliensis)).